Here is a 127-residue protein sequence, read N- to C-terminus: Small ribosomal subunit protein uS12m (127 aa).

It belongs to the universal ribosomal protein uS12 family.

Its subcellular location is the mitochondrion. Its function is as follows. Protein S12 is involved in the translation initiation step. The polypeptide is Small ribosomal subunit protein uS12m (RPS12) (Chondrus crispus (Carrageen Irish moss)).